A 280-amino-acid polypeptide reads, in one-letter code: Acetylglutamate kinase (280 aa).

Substrate contacts are provided by residues glycine 64–glycine 65, arginine 86, and asparagine 179.

Belongs to the acetylglutamate kinase family. ArgB subfamily.

The protein localises to the cytoplasm. The catalysed reaction is N-acetyl-L-glutamate + ATP = N-acetyl-L-glutamyl 5-phosphate + ADP. It participates in amino-acid biosynthesis; L-arginine biosynthesis; N(2)-acetyl-L-ornithine from L-glutamate: step 2/4. Catalyzes the ATP-dependent phosphorylation of N-acetyl-L-glutamate. The sequence is that of Acetylglutamate kinase from Campylobacter fetus subsp. fetus (strain 82-40).